The following is a 230-amino-acid chain: UPF0173 metal-dependent hydrolase RSKD131_0588 (230 aa).

The protein belongs to the UPF0173 family.

This is UPF0173 metal-dependent hydrolase RSKD131_0588 from Cereibacter sphaeroides (strain KD131 / KCTC 12085) (Rhodobacter sphaeroides).